We begin with the raw amino-acid sequence, 172 residues long: Protein-export protein SecB (172 aa).

Belongs to the SecB family. Homotetramer, a dimer of dimers. One homotetramer interacts with 1 SecA dimer.

It is found in the cytoplasm. Functionally, one of the proteins required for the normal export of preproteins out of the cell cytoplasm. It is a molecular chaperone that binds to a subset of precursor proteins, maintaining them in a translocation-competent state. It also specifically binds to its receptor SecA. In Bordetella avium (strain 197N), this protein is Protein-export protein SecB.